A 1705-amino-acid chain; its full sequence is Clathrin heavy chain 1 (1705 aa).

At Ala-2 the chain carries N-acetylalanine. The interval 2–492 (AAANAPIIMK…VDNDLALKIY (491 aa)) is globular terminal domain. WD40-like repeat regions lie at residues 25–67 (FITF…RPIT), 68–113 (ADSA…MPEQ), 114–155 (VAFW…ANLA), 156–205 (NNQI…QALE), 206–270 (AHAA…PDFA), 271–314 (DDFP…ISPD), and 315–343 (PIFL…ATVN). Residues 462-478 (ENWLAEDKLECSEELGD) are binding site for the uncoating ATPase, involved in lattice disassembly. A flexible linker region spans residues 493 to 536 (IKARATPKVVAAFAERREFDKILIYSKQVGYTPDYMFLLQTILR). The segment at 537–648 (TDPQGAVNFA…QSLKHYSELP (112 aa)) is distal segment. Residues 537–1705 (TDPQGAVNFA…PYGMPPMGGY (1169 aa)) form a heavy chain arm region. 7 CHCR repeats span residues 551–697 (QMEG…QIIV), 700–842 (CKEY…PEDF), 847–986 (ILSV…QLID), 993–1138 (LPES…VSDA), 1142–1283 (FIRA…FRLA), 1288–1434 (LNII…DIIN), and 1437–1580 (LNVL…KECF). The segment at 653–1705 (VIVNTHAIEP…PYGMPPMGGY (1053 aa)) is proximal segment. Residues 1227-1536 (AAKIIYAFIS…YIYKKAGRWK (310 aa)) are involved in binding clathrin light chain. A trimerization region spans residues 1564-1705 (AEQLLVYFIE…PYGMPPMGGY (142 aa)).

This sequence belongs to the clathrin heavy chain family. As to quaternary structure, clathrin triskelions, composed of 3 heavy chains and 3 light chains, are the basic subunits of the clathrin coat. Interacts with SCYL2B.

The protein localises to the cytoplasmic vesicle membrane. It is found in the membrane. It localises to the coated pit. In terms of biological role, clathrin is the major protein of the polyhedral coat of coated pits and vesicles. Mediates endocytosis and is required for a correct polar distribution of PIN auxin transporters. The protein is Clathrin heavy chain 1 of Arabidopsis thaliana (Mouse-ear cress).